A 490-amino-acid polypeptide reads, in one-letter code: Cheilanthifoline synthase (490 aa).

A helical membrane pass occupies residues 2-22 (EESLWVVTATVVVVFAIAKLL). Heme is bound at residue C432.

Belongs to the cytochrome P450 family. Requires heme as cofactor. In terms of tissue distribution, expressed in roots. Detected in leaves and stems.

The protein localises to the endoplasmic reticulum membrane. The catalysed reaction is (S)-scoulerine + reduced [NADPH--hemoprotein reductase] + O2 = (S)-cheilanthifoline + oxidized [NADPH--hemoprotein reductase] + 2 H2O + H(+). Its pathway is alkaloid biosynthesis. Its function is as follows. Methylenedioxy bridge-forming cytochrome P450 involved in the biosynthesis of isoquinoline alkaloids. Converts (S)-scoulerine into (R,S)-cheilanthifoline. Catalyzes an oxidative reaction that does not incorporate oxygen into the product. This Eschscholzia californica (California poppy) protein is Cheilanthifoline synthase (CYP719A5).